The sequence spans 112 residues: Transcriptional regulator ClgR (112 aa).

The region spanning 13–67 (LRGARMSQGRTLREVSDSARVSLGYLSEIERGRKEPSSELLSAICTALQLPLSVV) is the HTH cro/C1-type domain. Positions 24 to 43 (LREVSDSARVSLGYLSEIER) form a DNA-binding region, H-T-H motif.

Its function is as follows. Key stress-response regulator that plays an important role in multiple regulatory networks in response to different stress conditions. Required to manage host-derived stress during infection. Plays a role during hypoxia and reaeration. Controls the expression of many genes involved in heat shock, virulence, lipid metabolism, transport or regulation, including clpP1, clpP2, clpC1, hsp, groES, otsA, pknD, prcA and prcB. May function by protecting intracellular redox potential and by inducing the expression of trehalose, a constituent of cell walls that is important for defense against cell-surface and oxidative stress. Also performs different functions during stress response and is important for the pathogenicity of M.tuberculosis in vivo, regardless of the induction of the Clp proteolytic pathway. May directly activate SigE and/or SigH. This chain is Transcriptional regulator ClgR (clgR), found in Mycobacterium tuberculosis (strain CDC 1551 / Oshkosh).